Consider the following 503-residue polypeptide: WD repeat-containing protein 55 homolog (503 aa).

Disordered stretches follow at residues 1-21 (MHTHNNFKTPSDADELDDLDD) and 35-132 (ALVG…DDLD). 3 stretches are compositionally biased toward acidic residues: residues 12–21 (DADELDDLDD), 40–50 (DVSDSDIDEHD), and 78–96 (NAEDSSDSDDSMLEEDEAE). 6 WD repeats span residues 157 to 196 (KLEDFITDVCFHPDRDIIALATIIGDVHLYEYGNEGNKLL), 201 to 242 (VHSK…KLYE), 244 to 282 (AHDDAINKLHVLDENLFATGDDAGTVKLWDLRTKNPIFE), 285 to 324 (EVEDQITQMITNDQKKLLLATSADGYLTTFNIAARKLYVQ), 327 to 366 (PYEEELNCMGIYRGSSKLVVGTSKGKLYSYNWGYFGYHCD), and 411 to 450 (QHNMPIESLDINTSGELLASSSHNNDVRFWNVKYFEDFGD). Residues 483 to 503 (TKEDEDNADNNDAAAGPSNSA) are disordered.

The protein belongs to the WD repeat WDR55 family.

The polypeptide is WD repeat-containing protein 55 homolog (Drosophila persimilis (Fruit fly)).